The chain runs to 247 residues: Disease resistance protein BAK6 (247 aa).

An N-terminal signal peptide occupies residues 1 to 24 (MAAVQFAAAGVLTGLLALATLASC). N66, N104, and N113 each carry an N-linked (GlcNAc...) asparagine glycan. LRR repeat units lie at residues 90–114 (LESL…LGNL), 116–138 (DLIS…LGSI), 139–161 (STLR…SFGN), 162–186 (LTSL…LGNI), 188–210 (SLQF…VLSL), and 213–237 (VGNL…GLRV). N-linked (GlcNAc...) asparagine glycans are attached at residues N150 and N161. N215 carries N-linked (GlcNAc...) asparagine glycosylation.

In terms of assembly, interacts with WAK17 isoform 1; the interaction is direct. As to quaternary structure, (Microbial infection) Interacts with G.zeae CFEM1; the interaction is direct. Interacts with G.zeae CFEMN1; the interaction is direct. Interacts with G.zeae CFEM5; the interaction is direct.

Its function is as follows. Contributes to activation of the hypersensitive response, a form of programmed cell death, upon fungal infection. May sense the presence of fungal material and relay the signal to WAK17 isoform 1. This Zea mays (Maize) protein is Disease resistance protein BAK6.